Reading from the N-terminus, the 132-residue chain is Fatty acid-binding protein, brain (132 aa).

Residue V2 is modified to N-acetylvaline. 127–129 (RHY) lines the a fatty acid pocket.

The protein belongs to the calycin superfamily. Fatty-acid binding protein (FABP) family.

Its subcellular location is the cytoplasm. Its function is as follows. FABPs are thought to play a role in the intracellular transport of long-chain fatty acids and their acyl-CoA esters. The chain is Fatty acid-binding protein, brain (FABP7) from Gallus gallus (Chicken).